Here is an 826-residue protein sequence, read N- to C-terminus: Beta-galactosidase 7 (826 aa).

The N-terminal stretch at 1-25 is a signal peptide; the sequence is MKMKHFTRLLSLFFILITSLSLAKS. Asn154 carries an N-linked (GlcNAc...) asparagine glycan. Glu184 acts as the Proton donor in catalysis. Glu253 serves as the catalytic Nucleophile. Asn254, Asn351, Asn380, Asn491, Asn665, Asn706, Asn797, and Asn801 each carry an N-linked (GlcNAc...) asparagine glycan. The SUEL-type lectin domain maps to 740–826; the sequence is AHEHNKVELS…PKKLAVELEC (87 aa).

It belongs to the glycosyl hydrolase 35 family. As to expression, expressed in flowers.

It is found in the secreted. The protein resides in the extracellular space. Its subcellular location is the apoplast. The enzyme catalyses Hydrolysis of terminal non-reducing beta-D-galactose residues in beta-D-galactosides.. This is Beta-galactosidase 7 (BGAL7) from Arabidopsis thaliana (Mouse-ear cress).